Here is a 608-residue protein sequence, read N- to C-terminus: Phosphogluconate dehydratase (608 aa).

[4Fe-4S] cluster-binding residues include cysteine 154 and cysteine 221.

The protein belongs to the IlvD/Edd family. Requires [4Fe-4S] cluster as cofactor.

It carries out the reaction 6-phospho-D-gluconate = 2-dehydro-3-deoxy-6-phospho-D-gluconate + H2O. Its pathway is carbohydrate metabolism; Entner-Doudoroff pathway. Catalyzes the dehydration of 6-phospho-D-gluconate to 2-dehydro-3-deoxy-6-phospho-D-gluconate. This chain is Phosphogluconate dehydratase, found in Helicobacter pylori (strain ATCC 700392 / 26695) (Campylobacter pylori).